A 556-amino-acid polypeptide reads, in one-letter code: 2-succinyl-5-enolpyruvyl-6-hydroxy-3-cyclohexene-1-carboxylate synthase (556 aa).

This sequence belongs to the TPP enzyme family. MenD subfamily. As to quaternary structure, homodimer. Mg(2+) serves as cofactor. The cofactor is Mn(2+). It depends on thiamine diphosphate as a cofactor.

It catalyses the reaction isochorismate + 2-oxoglutarate + H(+) = 5-enolpyruvoyl-6-hydroxy-2-succinyl-cyclohex-3-ene-1-carboxylate + CO2. It participates in quinol/quinone metabolism; 1,4-dihydroxy-2-naphthoate biosynthesis; 1,4-dihydroxy-2-naphthoate from chorismate: step 2/7. It functions in the pathway quinol/quinone metabolism; menaquinone biosynthesis. In terms of biological role, catalyzes the thiamine diphosphate-dependent decarboxylation of 2-oxoglutarate and the subsequent addition of the resulting succinic semialdehyde-thiamine pyrophosphate anion to isochorismate to yield 2-succinyl-5-enolpyruvyl-6-hydroxy-3-cyclohexene-1-carboxylate (SEPHCHC). This is 2-succinyl-5-enolpyruvyl-6-hydroxy-3-cyclohexene-1-carboxylate synthase from Salmonella typhi.